The primary structure comprises 505 residues: tRNA (guanine(6)-N(2))-methyltransferase THUMP3 (505 aa).

Positions 145–182 (KAKRRKANQSAGKEKADCGQGDKADEKDGKKKHASSTS) are disordered. The span at 156-173 (GKEKADCGQGDKADEKDG) shows a compositional bias: basic and acidic residues. The 117-residue stretch at 171–287 (KDGKKKHASS…DNEVIVAIAL (117 aa)) folds into the THUMP domain.

The protein belongs to the methyltransferase superfamily. As to quaternary structure, part of the heterodimeric THUMPD3-TRM112 methyltransferase complex; this complex forms an active tRNA methyltransferase, where TRMT112 acts as an activator of the catalytic subunit THUMPD3. In terms of tissue distribution, ubiquitously expressed. Abundantly expressed in the testis, also expressed in the brain, heart, kidney, liver, lung, muscle and spleen.

It localises to the cytoplasm. The enzyme catalyses guanosine(6) in tRNA + S-adenosyl-L-methionine = N(2)-methylguanosine(6) in tRNA + S-adenosyl-L-homocysteine + H(+). The catalysed reaction is guanosine(7) in tRNA + S-adenosyl-L-methionine = N(2)-methylguanosine(7) in tRNA + S-adenosyl-L-homocysteine + H(+). Its function is as follows. Catalytic subunit of the THUMPD3-TRM112 methyltransferase complex, that specifically mediates the S-adenosyl-L-methionine-dependent N(2)-methylation of guanosine nucleotide at position 6 (m2G6) in tRNAs. This is one of the major tRNA (guanine-N(2))-methyltransferases. Also catalyzes the S-adenosyl-L-methionine-dependent N(2)-methylation of guanosine nucleotide at position 7 of tRNA(Trp). In Mus musculus (Mouse), this protein is tRNA (guanine(6)-N(2))-methyltransferase THUMP3.